We begin with the raw amino-acid sequence, 503 residues long: Surface lipoprotein assembly modifier (503 aa).

Positions 1-34 (MTITPVYTTFTPTKTPIKFFMAGLTFLIAHISHA) are cleaved as a signal peptide. The N-terminal domain stretch occupies residues 38-220 (RTDNQEPINQ…QYRQALKQRD (183 aa)). A TPR repeat occupies 136–169 (ILLGYANALAALDKGNAKKAIDELRRIIAIMPEY). Residues 221-503 (SWTWQVGMNL…QMFVEFSRIF (283 aa)) are C-terminal probable beta barrel. 14 beta stranded membrane passes run 222-232 (WTWQVGMNLAK), 259-270 (LSYQLGADKKWS), 275-285 (AYVGANAQIYG), 299-308 (GRLGANLGFA), 313-322 (DLSIETYGEK), 334-343 (IGIRMSVDYR), 348-358 (FQSLNAIDISR), 372-382 (TLYSTSLIYYP), 387-396 (YYLLGADFYD), 410-419 (RGIRTAWGQE), 424-434 (LSSRAQISINK), 454-463 (MQASLSLWHR), 470-479 (ITPRLTISTN), and 493-503 (NQMFVEFSRIF).

This sequence belongs to the Slam family.

The protein resides in the cell outer membrane. Functionally, required for correct export to the cell surface of some cell outer membrane lipoproteins (tested with TpbP) upon heterologous expression in E.coli and probably also in Moraxella. The protein is Surface lipoprotein assembly modifier of Moraxella catarrhalis (Branhamella catarrhalis).